Reading from the N-terminus, the 330-residue chain is Putative heme-binding peroxidase (330 aa).

Histidine 38 acts as the Proton acceptor in catalysis. Histidine 162 is a heme b binding site. Tryptophan 178 acts as the Tryptophan radical intermediate in catalysis. The tract at residues 286–330 is disordered; the sequence is GEYKSAPQKSPVPGAPGAGKDGEANPLARQNERAHGQAQHALAKL.

It belongs to the peroxidase family. Cytochrome c peroxidase subfamily. Heme b is required as a cofactor.

In terms of biological role, destroys radicals which are normally produced within the cells and which are toxic to biological systems. The chain is Putative heme-binding peroxidase (CCP2) from Mycosarcoma maydis (Corn smut fungus).